The sequence spans 784 residues: DNA ligase (784 aa).

NAD(+) is bound by residues 35 to 39 (DAEYD), 84 to 85 (SL), and E117. K119 (N6-AMP-lysine intermediate) is an active-site residue. NAD(+) is bound by residues R140, E177, K294, and K318. 4 residues coordinate Zn(2+): C412, C415, C442, and C448. The BRCT domain maps to 703–784 (AEGLPLAGQT…FLALLRQLES (82 aa)).

This sequence belongs to the NAD-dependent DNA ligase family. LigA subfamily. Mg(2+) serves as cofactor. It depends on Mn(2+) as a cofactor.

The enzyme catalyses NAD(+) + (deoxyribonucleotide)n-3'-hydroxyl + 5'-phospho-(deoxyribonucleotide)m = (deoxyribonucleotide)n+m + AMP + beta-nicotinamide D-nucleotide.. Functionally, DNA ligase that catalyzes the formation of phosphodiester linkages between 5'-phosphoryl and 3'-hydroxyl groups in double-stranded DNA using NAD as a coenzyme and as the energy source for the reaction. It is essential for DNA replication and repair of damaged DNA. This is DNA ligase from Azotobacter vinelandii (strain DJ / ATCC BAA-1303).